The primary structure comprises 464 residues: Agamous-like MADS-box protein AGL92 (464 aa).

The region spanning 1-60 (MRTKTKLVLIPDRHFRRATFRKRNAGIRKKLHELTTLCDIKACAVIYSPFENPTVWPSTE) is the MADS-box domain. Residues 85–114 (ETFLRDQITKEQNKLESLRRENRETQLKHF) are a coiled coil. Positions 443–464 (TSTGHMPSTTTTTTNNNNNNNV) are disordered. The span at 451 to 464 (TTTTTTNNNNNNNV) shows a compositional bias: low complexity.

Interacts with AGL62.

It localises to the nucleus. Functionally, putative transcription factor. The polypeptide is Agamous-like MADS-box protein AGL92 (AGL92) (Arabidopsis thaliana (Mouse-ear cress)).